Reading from the N-terminus, the 302-residue chain is Phospho-N-acetylmuramoyl-pentapeptide-transferase (302 aa).

The next 10 membrane-spanning stretches (helical) occupy residues 1–21, 42–62, 67–87, 101–121, 123–143, 154–174, 178–198, 204–224, 229–249, and 279–299; these read MIAA…NLFR, GTPT…GVLS, VILT…FLSI, ALLQ…ETAV, FFGI…IVIV, GLDG…WFFL, GFSE…LIFN, IFMG…VSVL, FYLI…ILQI, and IVAV…EVFG.

It belongs to the glycosyltransferase 4 family. MraY subfamily. It depends on Mg(2+) as a cofactor.

The protein resides in the cell inner membrane. The catalysed reaction is UDP-N-acetyl-alpha-D-muramoyl-L-alanyl-gamma-D-glutamyl-meso-2,6-diaminopimeloyl-D-alanyl-D-alanine + di-trans,octa-cis-undecaprenyl phosphate = di-trans,octa-cis-undecaprenyl diphospho-N-acetyl-alpha-D-muramoyl-L-alanyl-D-glutamyl-meso-2,6-diaminopimeloyl-D-alanyl-D-alanine + UMP. It functions in the pathway cell wall biogenesis; peptidoglycan biosynthesis. Catalyzes the initial step of the lipid cycle reactions in the biosynthesis of the cell wall peptidoglycan: transfers peptidoglycan precursor phospho-MurNAc-pentapeptide from UDP-MurNAc-pentapeptide onto the lipid carrier undecaprenyl phosphate, yielding undecaprenyl-pyrophosphoryl-MurNAc-pentapeptide, known as lipid I. The sequence is that of Phospho-N-acetylmuramoyl-pentapeptide-transferase from Thermotoga neapolitana (strain ATCC 49049 / DSM 4359 / NBRC 107923 / NS-E).